A 535-amino-acid polypeptide reads, in one-letter code: Dual specificity calcium/calmodulin-dependent 3',5'-cyclic nucleotide phosphodiesterase 1B (535 aa).

The segment at 1–21 is disordered; the sequence is MELSPRSPPEMLESDCPSPLE. Residues Ser-7 and Ser-14 each carry the phosphoserine modification. 2 calmodulin-binding regions span residues 27-47 and 117-140; these read SKKM…QLEN and EKPK…MFRR. Positions 145 to 502 constitute a PDEase domain; that stretch reads VGPTYSTAVH…QKWKERAASG (358 aa). His-222 serves as the catalytic Proton donor. Zn(2+)-binding residues include His-226, His-262, Asp-263, and Asp-369. Residue Asp-263 coordinates Mg(2+). Disordered regions lie at residues 444–474 and 495–535; these read QPLA…GDPN and WKER…GNLD. Over residues 454–463 the composition is skewed to polar residues; the sequence is KSQPSFQWRQ. 2 positions are modified to phosphoserine: Ser-465 and Ser-513.

It belongs to the cyclic nucleotide phosphodiesterase family. PDE1 subfamily. Homodimer. It depends on Zn(2+) as a cofactor. Mg(2+) is required as a cofactor.

The protein localises to the cytoplasm. It is found in the cytosol. The enzyme catalyses a nucleoside 3',5'-cyclic phosphate + H2O = a nucleoside 5'-phosphate + H(+). It carries out the reaction 3',5'-cyclic GMP + H2O = GMP + H(+). The catalysed reaction is 3',5'-cyclic AMP + H2O = AMP + H(+). With respect to regulation, type I PDE are activated by the binding of calmodulin in the presence of Ca(2+). In terms of biological role, cyclic nucleotide phosphodiesterase with a dual specificity for the second messengers cAMP and cGMP, which are key regulators of many important physiological processes. Has a preference for cGMP as a substrate. This chain is Dual specificity calcium/calmodulin-dependent 3',5'-cyclic nucleotide phosphodiesterase 1B, found in Mus musculus (Mouse).